A 24-amino-acid polypeptide reads, in one-letter code: Pseudin-2 (24 aa).

As to expression, expressed by the skin glands.

The protein resides in the secreted. Its function is as follows. Antimicrobial peptide with activity against fungus (C.albicans) and Gram-positive and Gram-negative bacteria (S.aureus and E.coli). Also has low hemolytic activity against human erythrocytes. The chain is Pseudin-2 from Pseudis paradoxa (Paradoxical frog).